Reading from the N-terminus, the 137-residue chain is Basic phospholipase A2 homolog 4a (137 aa).

The first 16 residues, 1-16 (MRTLWIVTVLLVGVEG), serve as a signal peptide directing secretion. 7 disulfides stabilise this stretch: C42–C131, C44–C60, C59–C111, C65–C137, C66–C104, C73–C97, and C91–C102. The tract at residues 121 to 133 (KKYKIYPKFFCKK) is important for membrane-damaging activities in eukaryotes and bacteria; heparin-binding.

This sequence belongs to the phospholipase A2 family. Group II subfamily. K49 sub-subfamily. Homodimer; non-covalently linked. As to expression, expressed by the venom gland.

The protein resides in the secreted. Functionally, snake venom phospholipase A2 homolog that lacks enzymatic activity. Is myotoxic and displays edema-inducing activities. A model of myotoxic mechanism has been proposed: an apo Lys49-PLA2 is activated by the entrance of a hydrophobic molecule (e.g. fatty acid) at the hydrophobic channel of the protein leading to a reorientation of a monomer. This reorientation causes a transition between 'inactive' to 'active' states, causing alignment of C-terminal and membrane-docking sites (MDoS) side-by-side and putting the membrane-disruption sites (MDiS) in the same plane, exposed to solvent and in a symmetric position for both monomers. The MDoS region stabilizes the toxin on membrane by the interaction of charged residues with phospholipid head groups. Subsequently, the MDiS region destabilizes the membrane with penetration of hydrophobic residues. This insertion causes a disorganization of the membrane, allowing an uncontrolled influx of ions (i.e. calcium and sodium), and eventually triggering irreversible intracellular alterations and cell death. The sequence is that of Basic phospholipase A2 homolog 4a from Bothrops asper (Terciopelo).